Reading from the N-terminus, the 195-residue chain is Auxin-responsive protein IAA14 (195 aa).

2 disordered regions span residues 1–61 (MAAE…SPAS) and 85–107 (STAA…NKGG). The EAR-like (transcriptional repression) motif lies at 10-14 (LRLGL). The 84-residue stretch at 108–191 (GLYVKVSMDG…SCKKLRIMRG (84 aa)) folds into the PB1 domain.

Belongs to the Aux/IAA family. Homodimers and heterodimers. Highly expressed in flowers. Expressed in etiolated seedlings.

It is found in the nucleus. Its function is as follows. Aux/IAA proteins are short-lived transcriptional factors that function as repressors of early auxin response genes at low auxin concentrations. The chain is Auxin-responsive protein IAA14 (IAA14) from Oryza sativa subsp. japonica (Rice).